The sequence spans 355 residues: Probable zinc transporter 12 (355 aa).

An N-terminal signal peptide occupies residues 1 to 25 (MSRFRKTLVSAFVLCLVIFPLLVSA). Residues 26 to 50 (AEEENQCGGSKGGSAAEKASALKYK) are Extracellular-facing. Residues 51-71 (IIAFFSILIAGVFGVCLPIFG) form a helical membrane-spanning segment. The Cytoplasmic portion of the chain corresponds to 72-77 (LKTESN). The chain crosses the membrane as a helical span at residues 78-98 (FFMYVKAFAAGVILATGFVHI). Residues 99-116 (LPDATESLTSSCLGEEPP) are Extracellular-facing. Residues 117-137 (WGDFPMTGLVAMAASILTMLI) traverse the membrane as a helical segment. The Cytoplasmic portion of the chain corresponds to 138 to 200 (ESFASGYLNR…DDDHIDMRKK (63 aa)). Residues 156 to 183 (TLPVSTGGEEEHAHTGSAHTHASQGHSH) form a disordered region. The chain crosses the membrane as a helical span at residues 201 to 221 (IVTQILELGIVVHSVIIGISL). Residues 222–231 (GASPSVSTIK) lie on the Extracellular side of the membrane. The helical transmembrane segment at 232–252 (PLIAAITFHQLFEGFGLGGCI) threads the bilayer. Over 253-261 (SEAKFRVKK) the chain is Cytoplasmic. A helical membrane pass occupies residues 262 to 282 (IWVMLMFFALTAPIGIGIGIG). Residues 283–302 (VAEIYNENSPMALKVSGFLN) lie on the Extracellular side of the membrane. The chain crosses the membrane as a helical span at residues 303-323 (ATASGILIYMALVDLVAPLFM). Topologically, residues 324–334 (NQKTQSSMKIQ) are cytoplasmic. The chain crosses the membrane as a helical span at residues 335–355 (VACSVSLVVGAGLMSLLAIWA).

Belongs to the ZIP transporter (TC 2.A.5) family.

The protein localises to the cell membrane. Zinc transporter involved in zinc uptake in roots. Targeted by BZIP23 transcription factor in response to zinc-deficient conditions. In Arabidopsis thaliana (Mouse-ear cress), this protein is Probable zinc transporter 12 (ZIP12).